The sequence spans 408 residues: MAFLARKTSSLLPATTSSTVKHMIYDEPHFAMQNSLAKLIKEKINPNVAQWEKSGRYPAHFVFKMLGQLGVFAVNKPVDYGGTGRDFAMSIAIAEQIGAVDCGSIPMSVMVQSDMSTPALAQFGSDSLRNRFLRPSINGDLVSSIAVSEPHAGSDVSAIRTHARRYGSDLIINGSKMWITNGDQADWACVLVNTSNAKNLHKNKSLVCIPLDSIGVHRSTPLDKLGMRSSDTVQLFFEDVRVPSSYIIGEEGRGFAYQMNQFNDERLVTVAVGLLPLQKCINETIEYARERLIFGKTLLDQQYVQFRLAELEAELEATRSLLYRTVLARCQGEDVSMLTAMAKLKIGRLARKVTDQCLQIWGGAGYLNDNGISRAFRDFRIFSIGAGCDEVMMQIIHKTQSKRQQKRI.

Glutamate 265 functions as the Proton acceptor in the catalytic mechanism.

It belongs to the acyl-CoA dehydrogenase family. Homotetramer. The cofactor is FAD.

The catalysed reaction is 3-methylbutanoyl-CoA + oxidized [electron-transfer flavoprotein] + H(+) = 3-methylbut-2-enoyl-CoA + reduced [electron-transfer flavoprotein]. It participates in amino-acid degradation; L-leucine degradation; (S)-3-hydroxy-3-methylglutaryl-CoA from 3-isovaleryl-CoA: step 1/3. This is Probable acyl-CoA dehydrogenase 6 (acdh-6) from Caenorhabditis elegans.